The primary structure comprises 366 residues: tRNA/tmRNA (uracil-C(5))-methyltransferase (366 aa).

Gln190, Tyr218, Asn223, Glu239, and Asp299 together coordinate S-adenosyl-L-methionine. Cys324 acts as the Nucleophile in catalysis. The Proton acceptor role is filled by Glu358.

Belongs to the class I-like SAM-binding methyltransferase superfamily. RNA M5U methyltransferase family. TrmA subfamily.

It carries out the reaction uridine(54) in tRNA + S-adenosyl-L-methionine = 5-methyluridine(54) in tRNA + S-adenosyl-L-homocysteine + H(+). It catalyses the reaction uridine(341) in tmRNA + S-adenosyl-L-methionine = 5-methyluridine(341) in tmRNA + S-adenosyl-L-homocysteine + H(+). Functionally, dual-specificity methyltransferase that catalyzes the formation of 5-methyluridine at position 54 (m5U54) in all tRNAs, and that of position 341 (m5U341) in tmRNA (transfer-mRNA). The chain is tRNA/tmRNA (uracil-C(5))-methyltransferase from Salmonella paratyphi A (strain ATCC 9150 / SARB42).